A 752-amino-acid chain; its full sequence is Translation initiation factor IF-2 (752 aa).

The interval 26 to 167 (RQGMGVKSHM…QPTQRKDKPL (142 aa)) is disordered. The segment covering 34 to 47 (HMSSVTPDQAQQLR) has biased composition (polar residues). Residues 72-81 (KQNNHQAQNH) show a composition bias toward low complexity. Basic and acidic residues predominate over residues 83-96 (QHHDHDKTQNERPQ). Polar residues predominate over residues 101–129 (SRSNNGTKDNNQHQNNGGRFGGSLNNDQG). Residues 131–150 (NGKRFNKKNKKNKKHNKNKR) are compositionally biased toward basic residues. The span at 151 to 167 (LREVAHKQPTQRKDKPL) shows a compositional bias: basic and acidic residues. The tr-type G domain occupies 253–422 (TRPAVVTVMG…LLQAEMLELK (170 aa)). The G1 stretch occupies residues 262-269 (GHVDHGKT). 262 to 269 (GHVDHGKT) is a binding site for GTP. Residues 287-291 (GITQE) are G2. The interval 308–311 (DTPG) is G3. Residues 308–312 (DTPGH) and 362–365 (NKID) contribute to the GTP site. A G4 region spans residues 362–365 (NKID). Positions 398 to 400 (SAK) are G5.

Belongs to the TRAFAC class translation factor GTPase superfamily. Classic translation factor GTPase family. IF-2 subfamily.

The protein resides in the cytoplasm. Its function is as follows. One of the essential components for the initiation of protein synthesis. Protects formylmethionyl-tRNA from spontaneous hydrolysis and promotes its binding to the 30S ribosomal subunits. Also involved in the hydrolysis of GTP during the formation of the 70S ribosomal complex. This is Translation initiation factor IF-2 from Limosilactobacillus reuteri (strain DSM 20016) (Lactobacillus reuteri).